A 402-amino-acid polypeptide reads, in one-letter code: Acetate kinase (402 aa).

Asparagine 7 contacts Mg(2+). Residue lysine 14 participates in ATP binding. Arginine 95 lines the substrate pocket. Aspartate 152 functions as the Proton donor/acceptor in the catalytic mechanism. ATP-binding positions include 212 to 216 (HLGNG), 286 to 288 (DMR), and 334 to 338 (GIGEN). Residue glutamate 388 participates in Mg(2+) binding.

It belongs to the acetokinase family. In terms of assembly, homodimer. Mg(2+) serves as cofactor. Mn(2+) is required as a cofactor.

It localises to the cytoplasm. It catalyses the reaction acetate + ATP = acetyl phosphate + ADP. It participates in metabolic intermediate biosynthesis; acetyl-CoA biosynthesis; acetyl-CoA from acetate: step 1/2. Functionally, catalyzes the formation of acetyl phosphate from acetate and ATP. Can also catalyze the reverse reaction. This chain is Acetate kinase, found in Nitratidesulfovibrio vulgaris (strain ATCC 29579 / DSM 644 / CCUG 34227 / NCIMB 8303 / VKM B-1760 / Hildenborough) (Desulfovibrio vulgaris).